The following is an 805-amino-acid chain: RFX-like transcription factor daf-19 (805 aa).

Residues Met-1 to Leu-14 show a composition bias toward polar residues. A disordered region spans residues Met-1–Asp-113. A compositionally biased stretch (basic and acidic residues) spans Lys-19–His-92. Over residues Asn-93–Thr-104 the composition is skewed to polar residues. A DNA-binding region (RFX-type winged-helix) is located at residues Thr-260–Asp-334.

It belongs to the RFX family. As to expression, ciliated sensory neurons. Expressed in the male tail HOB and RnB neurons but not in male-specific CEM head neurons or other ciliated neurons.

The protein localises to the nucleus. In terms of biological role, probable transcription factor. May regulate some genes of ciliated sensory neurons. May activate the expression of the shared components of sensory cilia, but not the cell-type-specific expression. Together with transcription factor atf-7, involved in regulation of the serotonergic response of ADF neurons to pathogenic food. Involved in male mating behavior; may play a role in functional specialization of PKD ciliated sensory neurons. This is RFX-like transcription factor daf-19 from Caenorhabditis elegans.